Reading from the N-terminus, the 532-residue chain is Probable C4-dicarboxylate sensor kinase (532 aa).

Residues 1–12 (MRLFRQLSIQWK) are Cytoplasmic-facing. A helical transmembrane segment spans residues 13–33 (ITILSFGIVAFALMMVSISLL). The Extracellular portion of the chain corresponds to 34–175 (GYVTSIKEDE…YADMIQEFWQ (142 aa)). Residues 176-196 (PALLIGLITALFGFWGSWLLA) traverse the membrane as a helical segment. Residues 197–532 (SHIKRQTFNM…FSIYLPKKRG (336 aa)) are Cytoplasmic-facing. A PAS domain is found at 216 to 279 (VERDASFNAI…PEILSIGKPL (64 aa)). The 217-residue stretch at 315–531 (SDVDRLAEEL…TFSIYLPKKR (217 aa)) folds into the Histidine kinase domain. Residue His339 is modified to Phosphohistidine; by autocatalysis.

The protein localises to the cell membrane. The enzyme catalyses ATP + protein L-histidine = ADP + protein N-phospho-L-histidine.. In terms of biological role, member of the two-component regulatory system DctS/DctR. Probably activates DctR by phosphorylation. Essential for expression of dctP. This chain is Probable C4-dicarboxylate sensor kinase (dctS), found in Halalkalibacterium halodurans (strain ATCC BAA-125 / DSM 18197 / FERM 7344 / JCM 9153 / C-125) (Bacillus halodurans).